The sequence spans 441 residues: Zinc finger and BTB domain-containing protein 26 (441 aa).

Residues 33 to 97 form the BTB domain; that stretch reads CDVTVLIDDI…CYSGVLEFPE (65 aa). Residues 134–177 are disordered; the sequence is DSKEGCEPQSASPQSKEQQGDARGSPKQDSPCIHPSEDSMDMED. A Glycyl lysine isopeptide (Lys-Gly) (interchain with G-Cter in SUMO2) cross-link involves residue lysine 184. The tract at residues 194 to 216 is disordered; sequence VRSKKDQNQFISSEPTALHSSEP. Polar residues predominate over residues 201–216; it reads NQFISSEPTALHSSEP. Lysine 255 is covalently cross-linked (Glycyl lysine isopeptide (Lys-Gly) (interchain with G-Cter in SUMO2)). 4 C2H2-type zinc fingers span residues 273–295, 298–320, 326–348, and 354–377; these read HQCPKCTRVFRHLENYANHLKMH, FMCLLCGKTFTQKGNLHRHMRVH, FQCKICGKTFSQKCSLQDHLNLH, and HKCNYCDMVFAHKPVLRKHLKQLH. Residue lysine 329 forms a Glycyl lysine isopeptide (Lys-Gly) (interchain with G-Cter in SUMO2) linkage.

As to expression, ubiquitous.

It is found in the nucleus. Functionally, may be involved in transcriptional regulation. The polypeptide is Zinc finger and BTB domain-containing protein 26 (ZBTB26) (Homo sapiens (Human)).